The sequence spans 502 residues: Protein krueppel (502 aa).

2 disordered regions span residues P115–V164 and D178–G202. Low complexity-rich tracts occupy residues T119–L136 and S183–S198. 5 C2H2-type zinc fingers span residues F222–H244, F250–H272, Y278–H300, Y306–H328, and F334–C354. Disordered stretches follow at residues N399–G427 and R445–H502. The span at E410–E419 shows a compositional bias: acidic residues. Residues S468, S471, and S477 each carry the phosphoserine modification. Acidic residues predominate over residues D482–D491.

The protein belongs to the krueppel C2H2-type zinc-finger protein family.

The protein resides in the nucleus. Its function is as follows. Krueppel is a gap class segmentation protein. It is involved in the segmentation of the embryo and in the differentiation of the Malpighian tubules. The polypeptide is Protein krueppel (Kr) (Drosophila melanogaster (Fruit fly)).